Here is a 124-residue protein sequence, read N- to C-terminus: Large-conductance mechanosensitive channel (124 aa).

The next 3 helical transmembrane spans lie at 14-34, 37-57, and 67-87; these read VIDLAVGVIIGAAFTAIVQSL, NLINPLIGIFVGKIDLSNLVF, and GSFINSVINFLIISFVVFLIV.

This sequence belongs to the MscL family. In terms of assembly, homopentamer.

It is found in the cell membrane. Channel that opens in response to stretch forces in the membrane lipid bilayer. May participate in the regulation of osmotic pressure changes within the cell. In Lactobacillus acidophilus (strain ATCC 700396 / NCK56 / N2 / NCFM), this protein is Large-conductance mechanosensitive channel.